The primary structure comprises 473 residues: Photosystem II CP43 reaction center protein (473 aa).

The propeptide occupies 1 to 14; it reads MKTLYSLRRFYHVE. Thr15 carries the N-acetylthreonine modification. The residue at position 15 (Thr15) is a Phosphothreonine. Helical transmembrane passes span 69–93, 134–155, 178–200, 255–275, and 291–312; these read LFEVAHFVPEKPMYEQGLILLPHLA, LLGPETLEESFPFFGYVWKDRN, KALYFGGVYDTWAPGGGDVRKIT, KPFAWARRALVWSGEAYLSYS, and WFNNTAYPSEFYGPTGPEASQA. Glu367 is a [CaMn4O5] cluster binding site. Residues 447-471 form a helical membrane-spanning segment; the sequence is RARAAAAGFEKGIDRDFEPVLSMTP.

It belongs to the PsbB/PsbC family. PsbC subfamily. In terms of assembly, PSII is composed of 1 copy each of membrane proteins PsbA, PsbB, PsbC, PsbD, PsbE, PsbF, PsbH, PsbI, PsbJ, PsbK, PsbL, PsbM, PsbT, PsbX, PsbY, PsbZ, Psb30/Ycf12, at least 3 peripheral proteins of the oxygen-evolving complex and a large number of cofactors. It forms dimeric complexes. Binds multiple chlorophylls and provides some of the ligands for the Ca-4Mn-5O cluster of the oxygen-evolving complex. It may also provide a ligand for a Cl- that is required for oxygen evolution. PSII binds additional chlorophylls, carotenoids and specific lipids. is required as a cofactor.

It localises to the plastid. It is found in the chloroplast thylakoid membrane. One of the components of the core complex of photosystem II (PSII). It binds chlorophyll and helps catalyze the primary light-induced photochemical processes of PSII. PSII is a light-driven water:plastoquinone oxidoreductase, using light energy to abstract electrons from H(2)O, generating O(2) and a proton gradient subsequently used for ATP formation. The protein is Photosystem II CP43 reaction center protein of Manihot esculenta (Cassava).